Here is a 353-residue protein sequence, read N- to C-terminus: UDP-N-acetylglucosamine--N-acetylmuramyl-(pentapeptide) pyrophosphoryl-undecaprenol N-acetylglucosamine transferase (353 aa).

Residues 11-13 (SAG), Arg164, Ser194, and Gln289 contribute to the UDP-N-acetyl-alpha-D-glucosamine site.

This sequence belongs to the glycosyltransferase 28 family. MurG subfamily.

Its subcellular location is the cell membrane. It carries out the reaction di-trans,octa-cis-undecaprenyl diphospho-N-acetyl-alpha-D-muramoyl-L-alanyl-D-glutamyl-meso-2,6-diaminopimeloyl-D-alanyl-D-alanine + UDP-N-acetyl-alpha-D-glucosamine = di-trans,octa-cis-undecaprenyl diphospho-[N-acetyl-alpha-D-glucosaminyl-(1-&gt;4)]-N-acetyl-alpha-D-muramoyl-L-alanyl-D-glutamyl-meso-2,6-diaminopimeloyl-D-alanyl-D-alanine + UDP + H(+). Its pathway is cell wall biogenesis; peptidoglycan biosynthesis. Cell wall formation. Catalyzes the transfer of a GlcNAc subunit on undecaprenyl-pyrophosphoryl-MurNAc-pentapeptide (lipid intermediate I) to form undecaprenyl-pyrophosphoryl-MurNAc-(pentapeptide)GlcNAc (lipid intermediate II). The chain is UDP-N-acetylglucosamine--N-acetylmuramyl-(pentapeptide) pyrophosphoryl-undecaprenol N-acetylglucosamine transferase from Clostridium kluyveri (strain ATCC 8527 / DSM 555 / NBRC 12016 / NCIMB 10680 / K1).